Here is a 525-residue protein sequence, read N- to C-terminus: Transcriptional regulatory protein TOD6 (525 aa).

Residues 22–82 (GFSILSKHPH…NNPSSWDPSD (61 aa)) form a disordered region. A compositionally biased stretch (polar residues) spans 35-47 (LVHSHSLSHTNAK). Over residues 61–71 (STNKEEAESLK) the composition is skewed to basic and acidic residues. The region spanning 67–124 (AESLKKNNPSSWDPSDDIKLRHLKEIKNLGWKEIAHHFPNRTPNACQFRWRRLKSGNL) is the HTH myb-type domain. A DNA-binding region (H-T-H motif) is located at residues 97–120 (WKEIAHHFPNRTPNACQFRWRRLK). Ser280 is modified (phosphoserine). Residues 283–308 (PSTQIPHSTTKTRKNSHSVISSRRSS) form a disordered region. A compositionally biased stretch (low complexity) spans 299–308 (HSVISSRRSS). Ser333, Ser341, and Ser366 each carry phosphoserine. The tract at residues 451-510 (TNEGCKDEEEEDDIDPLHKENGINTPSQQSQNYGMLEAKHDNPKSSELSSMTSANDIRNE) is disordered. Composition is skewed to polar residues over residues 472-483 (GINTPSQQSQNY) and 495-506 (SSELSSMTSAND).

It belongs to the DOT6 family. In terms of assembly, component of the RPD3C(L) complex composed of at least ASH1, CTI6, DEP1, DOT6, PHO23, RPD3, RXT2, RXT3, SAP30, SDS3, SIN3, TOD6; UME1 and UME6.

It localises to the cytoplasm. The protein resides in the nucleus. Component of the RPD3 histone deacetylase complex RPD3C(L) responsible for the deacetylation of lysine residues on the N-terminal part of the core histones (H2A, H2B, H3 and H4). Histone deacetylation gives a tag for epigenetic repression and plays an important role in transcriptional regulation, cell cycle progression and developmental events. TOD6 binds to sequences containing the core CGATG, which resembles the PAC (Polymerase A and C) motif. The protein is Transcriptional regulatory protein TOD6 (TOD6) of Saccharomyces cerevisiae (strain ATCC 204508 / S288c) (Baker's yeast).